Here is a 581-residue protein sequence, read N- to C-terminus: Proline--tRNA ligase (581 aa).

It belongs to the class-II aminoacyl-tRNA synthetase family. ProS type 1 subfamily. As to quaternary structure, homodimer.

It localises to the cytoplasm. The enzyme catalyses tRNA(Pro) + L-proline + ATP = L-prolyl-tRNA(Pro) + AMP + diphosphate. Catalyzes the attachment of proline to tRNA(Pro) in a two-step reaction: proline is first activated by ATP to form Pro-AMP and then transferred to the acceptor end of tRNA(Pro). As ProRS can inadvertently accommodate and process non-cognate amino acids such as alanine and cysteine, to avoid such errors it has two additional distinct editing activities against alanine. One activity is designated as 'pretransfer' editing and involves the tRNA(Pro)-independent hydrolysis of activated Ala-AMP. The other activity is designated 'posttransfer' editing and involves deacylation of mischarged Ala-tRNA(Pro). The misacylated Cys-tRNA(Pro) is not edited by ProRS. This chain is Proline--tRNA ligase, found in Chlamydia trachomatis serovar D (strain ATCC VR-885 / DSM 19411 / UW-3/Cx).